The following is a 518-amino-acid chain: Protein CYCLOPS (518 aa).

The tract at residues 401 to 451 (DKKRKSLERYGSITSAVSDDKGDTTKKRRVERSRKMAEAKERNSTPSVPSD) is disordered. 2 consecutive short sequence motifs (nuclear localization signal) follow at residues 402-405 (KKRK) and 426-429 (KKRR). The segment covering 433-443 (SRKMAEAKERN) has biased composition (basic and acidic residues). A coiled-coil region spans residues 452–518 (MQAVLKRCEN…ERILSETEKM (67 aa)).

Belongs to the CYCLOPS family. Forms homodimers. Interacts with CCAMK. Phosphorylated at the N-terminus by CCAMK. In terms of tissue distribution, expressed in roots.

It is found in the nucleus. Its function is as follows. Involved in symbiotic signaling. Required for root infection by symbiotic rhizobia, infection thread (IT) formation, and nodule development. Probably not involved in nodule organogenesis. Involved in arbuscular mycorrhizal (AM) symbiosis. Required for fungal infection of the outer cortical cell layers, and for arbuscule development during the AM symbiosis, by binding, as a complex comprising CCaMK, CYCLOPS, and DELLA, to RAM1 promoter cis element thus promoting its expression. Acts downstream of CCAMK. Binds to the promoter of ERN1 and strongly transactivates ERN1, a transcriptional regulator required for nodulation. The polypeptide is Protein CYCLOPS (Lotus japonicus (Lotus corniculatus var. japonicus)).